The sequence spans 455 residues: Retinoic acid receptor beta (455 aa).

Residues 1–87 form a modulating region; the sequence is MTTSSRTCPV…PLPPPRVYKP (87 aa). The tract at residues 44 to 78 is disordered; the sequence is LQSHPPTSGCSTPSPATVETQSTSSEELVPSPPSP. Polar residues predominate over residues 47 to 66; sequence HPPTSGCSTPSPATVETQST. 2 consecutive NR C4-type zinc fingers follow at residues 88–108 and 124–148; these read CFVCQDKSSGYHYGVSACEGC and CHRDKNCVINKVTRNRCQYCRLQKC. The segment at residues 88-153 is a DNA-binding region (nuclear receptor); it reads CFVCQDKSSG…RLQKCFEVGM (66 aa). Residues 154-182 are hinge; sequence SKESVRNDRNKKKKEPTKQESTENYEMTA. Residues 183-417 form the NR LBD domain; sequence ELDDLTEKIR…PLIQEMLENS (235 aa). Residues 416–455 are disordered; it reads NSEGHEPLTPTSNGNTAEHSPSISPSSVDNSSVSQSPMVQ. The segment covering 424 to 434 has biased composition (polar residues); it reads TPTSNGNTAEH. Residues 435–455 show a composition bias toward low complexity; it reads SPSISPSSVDNSSVSQSPMVQ.

The protein belongs to the nuclear hormone receptor family. NR1 subfamily. As to quaternary structure, heterodimer; with a RXR molecule. Binds DNA preferentially as a RAR/RXR heterodimer.

The protein localises to the nucleus. Receptor for retinoic acid. Retinoic acid receptors bind as heterodimers to their target response elements in response to their ligands, all-trans or 9-cis retinoic acid, and regulate gene expression in various biological processes. The RAR/RXR heterodimers bind to the retinoic acid response elements (RARE) composed of tandem 5'-AGGTCA-3' sites known as DR1-DR5. Required for limb and craniofacial development. The polypeptide is Retinoic acid receptor beta (RARB) (Gallus gallus (Chicken)).